The primary structure comprises 535 residues: MTKYIFVTGGVVSSLGKGITAASLGRLLKNRGLNVTIQKFDPYINVDPGTMSPYQHGEVFVTDDGAETDLDLGHYERFIDINLNKYSNVTTGKIYSSVLQKERRGEYLGGTVQVIPHITNEIKERVYRSGRETNADVVITEIGGTVGDIESLPFLEAIRQIKSDIGRDNVMYIHCTLIPYLKAAGEMKTKPTQHSVKELRSLGIQPNIIVVRTEMPVSQDMKDKLALFCDIDTKAVIEARDADTLYAVPLSLQEQNMDQIVCDHLKLDNPAADMTEWTALVEKVRNLSKKTKIALVGKYVELQDAYISVVEALRHAGYSFDTDVEVKWVNAEHVTAENVQELVGDTDGILVPGGFGDRGVEGKIVAIQYARENKVPFLGICLGMQLASIEFARNVLGLEGANSSEINPDTPYAIIDLLPEQKDVEDLGGTLRLGLYPCKLSEETNAYNAYNEPVVYERHRHRYEFNNQFRPDMEKAGFVFSGTSPDGRLVEIIELKDHPWFVAAQFHPELVSRPNRPQPLFHDFVRASITNKESK.

The tract at residues 1–267 (MTKYIFVTGG…DQIVCDHLKL (267 aa)) is amidoligase domain. Residue Ser13 participates in CTP binding. Ser13 lines the UTP pocket. 14-19 (SLGKGI) is an ATP binding site. Tyr54 contacts L-glutamine. Asp71 lines the ATP pocket. Residues Asp71 and Glu141 each coordinate Mg(2+). CTP is bound by residues 148–150 (DIE), 188–193 (KTKPTQ), and Lys224. UTP contacts are provided by residues 188–193 (KTKPTQ) and Lys224. 240 to 242 (RDA) contributes to the ATP binding site. Positions 292–534 (KIALVGKYVE…VRASITNKES (243 aa)) constitute a Glutamine amidotransferase type-1 domain. Residue Gly354 participates in L-glutamine binding. The active-site Nucleophile; for glutamine hydrolysis is the Cys381. L-glutamine is bound by residues 382–385 (LGMQ), Glu405, and Arg462. Residues His507 and Glu509 contribute to the active site.

The protein belongs to the CTP synthase family. As to quaternary structure, homotetramer.

The catalysed reaction is UTP + L-glutamine + ATP + H2O = CTP + L-glutamate + ADP + phosphate + 2 H(+). It carries out the reaction L-glutamine + H2O = L-glutamate + NH4(+). It catalyses the reaction UTP + NH4(+) + ATP = CTP + ADP + phosphate + 2 H(+). Its pathway is pyrimidine metabolism; CTP biosynthesis via de novo pathway; CTP from UDP: step 2/2. With respect to regulation, allosterically activated by GTP, when glutamine is the substrate; GTP has no effect on the reaction when ammonia is the substrate. The allosteric effector GTP functions by stabilizing the protein conformation that binds the tetrahedral intermediate(s) formed during glutamine hydrolysis. Inhibited by the product CTP, via allosteric rather than competitive inhibition. Its function is as follows. Catalyzes the ATP-dependent amination of UTP to CTP with either L-glutamine or ammonia as the source of nitrogen. Regulates intracellular CTP levels through interactions with the four ribonucleotide triphosphates. This chain is CTP synthase, found in Bacillus cereus (strain AH820).